A 239-amino-acid polypeptide reads, in one-letter code: Eukaryotic translation initiation factor 6 (239 aa).

The protein belongs to the eIF-6 family. As to quaternary structure, monomer. Associates with the 60S ribosomal subunit.

The protein resides in the cytoplasm. It localises to the nucleus. Its subcellular location is the nucleolus. Its function is as follows. Binds to the 60S ribosomal subunit and prevents its association with the 40S ribosomal subunit to form the 80S initiation complex in the cytoplasm. May also be involved in ribosome biogenesis. This Entamoeba dispar (strain ATCC PRA-260 / SAW760) protein is Eukaryotic translation initiation factor 6.